A 206-amino-acid polypeptide reads, in one-letter code: N-(5'-phosphoribosyl)anthranilate isomerase (206 aa).

It belongs to the TrpF family.

It catalyses the reaction N-(5-phospho-beta-D-ribosyl)anthranilate = 1-(2-carboxyphenylamino)-1-deoxy-D-ribulose 5-phosphate. The protein operates within amino-acid biosynthesis; L-tryptophan biosynthesis; L-tryptophan from chorismate: step 3/5. The chain is N-(5'-phosphoribosyl)anthranilate isomerase from Citrifermentans bemidjiense (strain ATCC BAA-1014 / DSM 16622 / JCM 12645 / Bem) (Geobacter bemidjiensis).